The following is a 2013-amino-acid chain: Cell adhesion molecule DSCAM (2013 aa).

The N-terminal stretch at 1–17 is a signal peptide; the sequence is MWILALSLFQSFANVFS. The Extracellular segment spans residues 19-1594; sequence EPHSSLYFVN…EGLTTNEGLK (1576 aa). Ig-like C2-type domains are found at residues 20 to 119, 125 to 216, 225 to 305, 313 to 401, 407 to 500, 504 to 592, 596 to 685, 690 to 783, and 787 to 883; these read PHSS…VHIK, PYTV…ARLF, PSIL…AKVI, PLKA…VQVV, PKII…ARIN, PASI…VHVT, PPFI…SQLI, PKFV…MYLT, and PAMI…LTVQ. 9 cysteine pairs are disulfide-bonded: C46/C102, C145/C197, C246/C293, C335/C385, C428/C484, C525/C575, C617/C669, C711/C766, and C809/C865. A glycan (N-linked (GlcNAc...) asparagine) is linked at N78. The N-linked (GlcNAc...) asparagine glycan is linked to N470. A glycan (N-linked (GlcNAc...) asparagine) is linked at N666. Fibronectin type-III domains follow at residues 885–982, 987–1086, 1091–1187, and 1191–1285; these read PPDP…ADEA, PPQE…TLED, PPEN…TKED, and PPAG…AKAP. 2 N-linked (GlcNAc...) asparagine glycosylation sites follow: N1160 and N1250. The Ig-like C2-type 10 domain occupies 1285–1377; that stretch reads PARILTFSGT…DEIILNLQVQ (93 aa). Residues C1307 and C1359 are joined by a disulfide bond. 2 Fibronectin type-III domains span residues 1379–1473 and 1474–1575; these read PPDQ…TLGK and EPQF…TIPP. A helical membrane pass occupies residues 1595–1615; the sequence is ILVTISCILVGVLLLFVLLLV. Residues 1616 to 2013 lie on the Cytoplasmic side of the membrane; that stretch reads VRRRRREQRL…NPYAKSYTLV (398 aa). Residues 1616-2013 are required for netrin-mediated axon repulsion of neuronal growth cones; it reads VRRRRREQRL…NPYAKSYTLV (398 aa). Disordered stretches follow at residues 1718–1809 and 1920–2013; these read LVDV…SASS and RDLS…YTLV. Low complexity predominate over residues 1799 to 1809; that stretch reads SSMVSTESASS. Residues 1949–1968 are compositionally biased toward polar residues; that stretch reads EASSSTSSTREGQQSWQQGA.

As to quaternary structure, homodimer; mediates homophilic interactions to promote cell adhesion. Interacts with DCC; the interaction is abolished in response to NTN1. Interacts (via extracellular domain) with NTN1. Interacts (via extracellular domain) with UNC5C (via Ig-like C2-type domain). Interacts with PTK2. Interacts with FYN. Phosphorylated at tyrosine residues. Phosphorylation is enhanced by NTN1.

It is found in the cell membrane. The protein localises to the cell projection. Its subcellular location is the axon. The protein resides in the dendrite. It localises to the growth cone. It is found in the synapse. In terms of biological role, cell adhesion molecule that plays a role in neuronal self-avoidance. Promotes repulsion between specific neuronal processes of either the same cell or the same subtype of cells. Mediates within retinal amacrine and ganglion cell subtypes both isoneuronal self-avoidance for creating an orderly dendritic arborization and heteroneuronal self-avoidance to maintain the mosaic spacing between amacrine and ganglion cell bodies. Receptor for netrin required for axon guidance independently of and in collaboration with the receptor DCC. Might also collaborate with UNC5C in NTN1-mediated axon repulsion independently of DCC. In spinal cord development plays a role in guiding commissural axons projection and pathfinding across the ventral midline to reach the floor plate upon ligand binding. Mediates intracellular signaling by stimulating the activation of MAPK8 and MAP kinase p38. Adhesion molecule that promotes lamina-specific synaptic connections in the retina: expressed in specific subsets of interneurons and retinal ganglion cells (RGCs) and promotes synaptic connectivity via homophilic interactions. The chain is Cell adhesion molecule DSCAM (Dscam) from Rattus norvegicus (Rat).